A 362-amino-acid chain; its full sequence is Probable choline-phosphate cytidylyltransferase (362 aa).

Basic and acidic residues predominate over residues 1-37 (MGEEGIKINDTHKRRIDEVEPSEKEDNVERQTKKYNF). The tract at residues 1-79 (MGEEGIKIND…VSPVEEEPRD (79 aa)) is disordered. CTP-binding positions include 109–117 (VFDLFHIGH) and lysine 147. Lysine 147 and tryptophan 176 together coordinate substrate. CTP is bound by residues 193-194 (HD), tyrosine 198, and 221-225 (RTEGV). Positions 308–362 (KNPLHGSSEPSSPGPTGFLGGINRWMQRRSSSHYDLPRVGNEIAASSSSATEENH) are disordered. Composition is skewed to low complexity over residues 313–323 (GSSEPSSPGPT) and 351–362 (AASSSSATEENH). A phosphoserine mark is found at serine 315 and serine 319. Threonine 323 is modified (phosphothreonine). Residue serine 355 is modified to Phosphoserine.

Belongs to the cytidylyltransferase family.

Its subcellular location is the nucleus. The catalysed reaction is phosphocholine + CTP + H(+) = CDP-choline + diphosphate. The protein is Probable choline-phosphate cytidylyltransferase of Schizosaccharomyces pombe (strain 972 / ATCC 24843) (Fission yeast).